We begin with the raw amino-acid sequence, 130 residues long: uncharacterized protein (130 aa).

The signal sequence occupies residues 1 to 19 (MKVLGNILWWAFVGFMAYA).

This is an uncharacterized protein from Escherichia coli (strain K12).